A 531-amino-acid polypeptide reads, in one-letter code: Arginine--tRNA ligase (531 aa).

Residues 113–123 (ANPTGPLHIGH) carry the 'HIGH' region motif.

Belongs to the class-I aminoacyl-tRNA synthetase family. Monomer.

The protein resides in the cytoplasm. It catalyses the reaction tRNA(Arg) + L-arginine + ATP = L-arginyl-tRNA(Arg) + AMP + diphosphate. This chain is Arginine--tRNA ligase, found in Campylobacter fetus subsp. fetus (strain 82-40).